The primary structure comprises 84 residues: CDC42 small effector protein 2 (84 aa).

Residues cysteine 10 and cysteine 11 are each lipidated (S-palmitoyl cysteine). The region spanning 29–42 (IGEPTNFAHTAHVG) is the CRIB domain. 2 positions are modified to phosphoserine: serine 43 and serine 52.

It belongs to the CDC42SE/SPEC family. As to quaternary structure, interacts with CDC42 (in GTP-bound form). Interacts weakly with RAC1 and not at all with RHOA.

The protein localises to the cytoplasm. It is found in the cytoskeleton. The protein resides in the cell membrane. It localises to the cell projection. Its subcellular location is the phagocytic cup. In terms of biological role, probably involved in the organization of the actin cytoskeleton by acting downstream of CDC42, inducing actin filament assembly. Alters CDC42-induced cell shape changes. In activated T-cells, may play a role in CDC42-mediated F-actin accumulation at the immunological synapse. May play a role in early contractile events in phagocytosis in macrophages. This Pongo abelii (Sumatran orangutan) protein is CDC42 small effector protein 2 (CDC42SE2).